The sequence spans 62 residues: Large ribosomal subunit protein bL28 (62 aa).

It belongs to the bacterial ribosomal protein bL28 family.

In Thermobifida fusca (strain YX), this protein is Large ribosomal subunit protein bL28.